A 311-amino-acid chain; its full sequence is Putative S-adenosyl-L-methionine-dependent methyltransferase MRA_0152 (311 aa).

S-adenosyl-L-methionine contacts are provided by residues D135 and 164–165 (DL).

It belongs to the UPF0677 family.

Its function is as follows. Exhibits S-adenosyl-L-methionine-dependent methyltransferase activity. This is Putative S-adenosyl-L-methionine-dependent methyltransferase MRA_0152 from Mycobacterium tuberculosis (strain ATCC 25177 / H37Ra).